Here is a 557-residue protein sequence, read N- to C-terminus: (-)-germacrene D synthase (557 aa).

Residues D310, D314, and E462 each contribute to the Mg(2+) site. Residues 310 to 314 carry the DDXXD motif motif; sequence DDIYD.

It belongs to the terpene synthase family. Tpsa subfamily. Requires Mg(2+) as cofactor. In terms of tissue distribution, expressed in flowers. Detected in stems, young leaves and tendrils.

The protein localises to the cytoplasm. The enzyme catalyses (2E,6E)-farnesyl diphosphate + H2O = (1E,4S,5E,7R)-germacra-1(10),5-dien-11-ol + diphosphate. The catalysed reaction is (2E,6E)-farnesyl diphosphate = (-)-germacrene D + diphosphate. The protein operates within secondary metabolite biosynthesis; terpenoid biosynthesis. Functionally, involved in the biosynthesis of germacrene D. Can use farnesyl diphosphate as substrate, but not geranyl diphosphate or geranylgeranyl diphosphate. Produces mainly (-)-germacrene D along with gamma-cadinene. In Vitis vinifera (Grape), this protein is (-)-germacrene D synthase.